The sequence spans 177 residues: Ubiquitin-conjugating enzyme E2 C (177 aa).

Residues 1-31 (MSGQNIDPAANQVRQKERPRDMTTSKERHSV) are disordered. The span at 14-30 (RQKERPRDMTTSKERHS) shows a compositional bias: basic and acidic residues. One can recognise a UBC core domain in the interval 30 to 175 (SVSKRLQQEL…LHEKYKTAQS (146 aa)). Cysteine 114 functions as the Glycyl thioester intermediate in the catalytic mechanism.

Belongs to the ubiquitin-conjugating enzyme family. In terms of assembly, component of the APC/C complex. Autoubiquitinated by the APC/C complex, leading to its degradation by the proteasome.

It carries out the reaction S-ubiquitinyl-[E1 ubiquitin-activating enzyme]-L-cysteine + [E2 ubiquitin-conjugating enzyme]-L-cysteine = [E1 ubiquitin-activating enzyme]-L-cysteine + S-ubiquitinyl-[E2 ubiquitin-conjugating enzyme]-L-cysteine.. The enzyme catalyses S-ubiquitinyl-[E1 ubiquitin-activating enzyme]-L-cysteine + [acceptor protein]-L-lysine = [E1 ubiquitin-activating enzyme]-L-cysteine + N(6)-monoubiquitinyl-[acceptor protein]-L-lysine.. It participates in protein modification; protein ubiquitination. In terms of biological role, catalyzes the covalent attachment of ubiquitin to other proteins. Acts as an essential factor of the anaphase promoting complex/cyclosome (APC/C), a cell cycle-regulated ubiquitin ligase that is essential for the transition from metaphase to anaphase in mitosis. Involved in both degradation of proteins responsible for maintaining sister chromatid cohesion at the onset of anaphase and of mitotic cyclins A and B at the exit of mitosis. Acts by initiating polyubiquitin chains on APC/C substrates, leading to the degradation of APC/C substrates by the proteasome and promoting mitotic exit. The protein is Ubiquitin-conjugating enzyme E2 C (UBE2C) of Spisula solidissima (Atlantic surf-clam).